The primary structure comprises 288 residues: Light-independent protochlorophyllide reductase iron-sulfur ATP-binding protein (288 aa).

ATP-binding positions include 10–15 (GIGKST) and K39. A Mg(2+)-binding site is contributed by S14. Residues C95 and C129 each contribute to the [4Fe-4S] cluster site. Residue 180–181 (NR) participates in ATP binding.

Belongs to the NifH/BchL/ChlL family. As to quaternary structure, homodimer. Protochlorophyllide reductase is composed of three subunits; ChlL, ChlN and ChlB. [4Fe-4S] cluster is required as a cofactor.

It catalyses the reaction chlorophyllide a + oxidized 2[4Fe-4S]-[ferredoxin] + 2 ADP + 2 phosphate = protochlorophyllide a + reduced 2[4Fe-4S]-[ferredoxin] + 2 ATP + 2 H2O. The protein operates within porphyrin-containing compound metabolism; chlorophyll biosynthesis (light-independent). Functionally, component of the dark-operative protochlorophyllide reductase (DPOR) that uses Mg-ATP and reduced ferredoxin to reduce ring D of protochlorophyllide (Pchlide) to form chlorophyllide a (Chlide). This reaction is light-independent. The L component serves as a unique electron donor to the NB-component of the complex, and binds Mg-ATP. The protein is Light-independent protochlorophyllide reductase iron-sulfur ATP-binding protein of Trichodesmium erythraeum (strain IMS101).